Consider the following 161-residue polypeptide: Ribosomal RNA large subunit methyltransferase H (161 aa).

S-adenosyl-L-methionine-binding positions include Leu78, Gly110, and 129–134 (LSRLTF).

The protein belongs to the RNA methyltransferase RlmH family. As to quaternary structure, homodimer.

Its subcellular location is the cytoplasm. The enzyme catalyses pseudouridine(1915) in 23S rRNA + S-adenosyl-L-methionine = N(3)-methylpseudouridine(1915) in 23S rRNA + S-adenosyl-L-homocysteine + H(+). Its function is as follows. Specifically methylates the pseudouridine at position 1915 (m3Psi1915) in 23S rRNA. The chain is Ribosomal RNA large subunit methyltransferase H from Heliobacterium modesticaldum (strain ATCC 51547 / Ice1).